The primary structure comprises 98 residues: NADH-ubiquinone oxidoreductase chain 4L (98 aa).

3 consecutive transmembrane segments (helical) span residues 1–21, 29–49, and 61–81; these read MPVI…GLLI, SLLC…TLAL, and IILL…LVMV.

This sequence belongs to the complex I subunit 4L family. In terms of assembly, core subunit of respiratory chain NADH dehydrogenase (Complex I) which is composed of 45 different subunits.

The protein resides in the mitochondrion inner membrane. The catalysed reaction is a ubiquinone + NADH + 5 H(+)(in) = a ubiquinol + NAD(+) + 4 H(+)(out). In terms of biological role, core subunit of the mitochondrial membrane respiratory chain NADH dehydrogenase (Complex I) which catalyzes electron transfer from NADH through the respiratory chain, using ubiquinone as an electron acceptor. Part of the enzyme membrane arm which is embedded in the lipid bilayer and involved in proton translocation. The polypeptide is NADH-ubiquinone oxidoreductase chain 4L (MT-ND4L) (Echinops telfairi (Lesser hedgehog tenrec)).